Consider the following 276-residue polypeptide: 6-chlorohydroxyquinol 1,2-dioxygenase (276 aa).

Residues Tyr-157, Tyr-191, His-215, and His-217 each coordinate Fe cation.

The protein belongs to the intradiol ring-cleavage dioxygenase family. It depends on Fe(3+) as a cofactor.

It participates in aromatic compound metabolism. The protein operates within xenobiotic degradation. Involved in the degradation of 2,4,6-trichlorophenol (2,4,6-TCP). May catalyze the oxidation of 6-chlorohydroxyquinol (6-CHQ) to 2-chloromaleylacetate (2-CMA). This is 6-chlorohydroxyquinol 1,2-dioxygenase from Cupriavidus pinatubonensis (strain JMP 134 / LMG 1197) (Cupriavidus necator (strain JMP 134)).